Reading from the N-terminus, the 628-residue chain is MGKEMKQTAFEKSIDSASQIMLQKAEDEGIETAWDRYEQQLPQCSFGQLGICCRNCNMGPCRIDPFGEGTEKGICGATADIIVARNLLRMIAAGAAAHSDHARDAVLTFKKMSEGKAGSYRIKDEAKLYSLASEYGISAEEKSREEVAVELASALLSEFGKQEGPILCTKRAPESRLKLWSELGIEPRGIDREIVECMHRTHIGVDNDATHILLHGLRTSLSDGWGGSMIATEIQDVLFGTPEPKKSTVNLGVLSHDKVNVIVHGHEPILSEMIVEAAEDPELLELAEEKGATGINVAGICCTGNETLMRHGTPIAGTFLQQELAVITGAVEAMVVDVQCIMPSLGNLTGCYHTKFISTSPKADFPGTARMEFHEEEAYATAKEIVKAAVENFPNRNLKKVSIPEEKQECMVGFSAEAILKALGGSPAPLIEAIAGGAIKGIGAVVGCNNVKIQHNYGHVNLVKELIKNNVLVVTTGCNAIACAEAGLLVPEAAALAGDGLKGVCEALGIPPVLHMGSCVDISRILVLASAVANSLGVDISDLPAAGAAPEWMSEKAVSIGAYVVSSGVFTVLGTIPPVLGSQAVTALLTKGLDGVIGASFAVEPDPFKAADLMLEHIEGKRKALGLK.

6 residues coordinate [4Fe-4S] cluster: Cys-44, Cys-52, Cys-53, Cys-56, Cys-61, and Cys-75. Residues His-266, Cys-302, Cys-340, Cys-448, Cys-478, and Cys-519 each coordinate [Ni-4Fe-5S] cluster.

Belongs to the Ni-containing carbon monoxide dehydrogenase family. Homodimer. It depends on [4Fe-4S] cluster as a cofactor. The cofactor is [Ni-4Fe-5S] cluster.

The enzyme catalyses CO + 2 oxidized [2Fe-2S]-[ferredoxin] + H2O = 2 reduced [2Fe-2S]-[ferredoxin] + CO2 + 2 H(+). CODH oxidizes carbon monoxide coupled, via CooF, to the reduction of a hydrogen cation by a hydrogenase (possibly CooH). The chain is Carbon monoxide dehydrogenase 1 (cooS1) from Methanosarcina acetivorans (strain ATCC 35395 / DSM 2834 / JCM 12185 / C2A).